The chain runs to 335 residues: Acetyl-coenzyme A carboxylase carboxyl transferase subunit alpha (335 aa).

The CoA carboxyltransferase C-terminal domain maps to 40–294; the sequence is QLETLATRRR…KASIERHLSE (255 aa).

It belongs to the AccA family. In terms of assembly, acetyl-CoA carboxylase is a heterohexamer composed of biotin carboxyl carrier protein (AccB), biotin carboxylase (AccC) and two subunits each of ACCase subunit alpha (AccA) and ACCase subunit beta (AccD).

The protein localises to the cytoplasm. It catalyses the reaction N(6)-carboxybiotinyl-L-lysyl-[protein] + acetyl-CoA = N(6)-biotinyl-L-lysyl-[protein] + malonyl-CoA. The protein operates within lipid metabolism; malonyl-CoA biosynthesis; malonyl-CoA from acetyl-CoA: step 1/1. In terms of biological role, component of the acetyl coenzyme A carboxylase (ACC) complex. First, biotin carboxylase catalyzes the carboxylation of biotin on its carrier protein (BCCP) and then the CO(2) group is transferred by the carboxyltransferase to acetyl-CoA to form malonyl-CoA. This Prochlorococcus marinus (strain MIT 9515) protein is Acetyl-coenzyme A carboxylase carboxyl transferase subunit alpha.